A 209-amino-acid polypeptide reads, in one-letter code: N-(5'-phosphoribosyl)anthranilate isomerase (209 aa).

Belongs to the TrpF family.

It carries out the reaction N-(5-phospho-beta-D-ribosyl)anthranilate = 1-(2-carboxyphenylamino)-1-deoxy-D-ribulose 5-phosphate. The protein operates within amino-acid biosynthesis; L-tryptophan biosynthesis; L-tryptophan from chorismate: step 3/5. The protein is N-(5'-phosphoribosyl)anthranilate isomerase of Staphylococcus carnosus (strain TM300).